A 269-amino-acid polypeptide reads, in one-letter code: WW domain-binding protein 1 (269 aa).

2 short sequence motifs (PPxY motif) span residues 124–127 (PPAY) and 137–141 (PPPPY). 2 disordered regions span residues 169–203 (EGTN…PPSC) and 249–269 (PPES…GDIP). Polar residues predominate over residues 174–183 (EGVSSHQSAP).

Interacts with NEDD4. Binds to the WW domain of YAP1, WWP1 and WWP2. Interacts with WWOX. As to expression, expressed in most tissues but at significantly lower levels in placenta, lung, liver, and kidney.

This Homo sapiens (Human) protein is WW domain-binding protein 1 (WBP1).